A 404-amino-acid polypeptide reads, in one-letter code: Keratin, type I cuticular Ha3-I (404 aa).

The head stretch occupies residues Met1 to Glu56. Residues Glu56 to Leu367 form the IF rod domain. A coil 1A region spans residues Lys57 to Arg91. The interval Asn92 to Ala102 is linker 1. The tract at residues Tyr103–Cys203 is coil 1B. The segment at Gln204–Val219 is linker 12. The coil 2 stretch occupies residues Asp220–Glu363. The segment at Asp364 to Arg404 is tail.

This sequence belongs to the intermediate filament family.

In Mus musculus (Mouse), this protein is Keratin, type I cuticular Ha3-I.